A 454-amino-acid polypeptide reads, in one-letter code: Cerebellar degeneration-related protein 2 (454 aa).

2 coiled-coil regions span residues 44-142 (ELED…SGQG) and 192-265 (EEEN…QSEH). Residues 134–153 (EELKSSGQGRRSPGKCDQEK) are disordered. A Phosphoserine modification is found at serine 311. Positions 346–380 (LHEVDTQYSALKVKYEELLKKCQEEQDSLSHKAVQ) form a coiled coil.

The protein belongs to the CDR2 family.

The protein is Cerebellar degeneration-related protein 2 (CDR2) of Homo sapiens (Human).